The chain runs to 1003 residues: Glycine--tRNA ligase (1003 aa).

Positions 1–310 (MSSQPLTLQT…VTPKKIPTIC (310 aa)) are glycine--tRNA ligase alpha subunit. Residues 311–1003 (QPEDFLLEIG…CFGFYAWGVL (693 aa)) form a glycine--tRNA ligase beta subunit region.

It belongs to the class-II aminoacyl-tRNA synthetase family.

It localises to the cytoplasm. The enzyme catalyses tRNA(Gly) + glycine + ATP = glycyl-tRNA(Gly) + AMP + diphosphate. The sequence is that of Glycine--tRNA ligase (glyQS) from Chlamydia trachomatis serovar D (strain ATCC VR-885 / DSM 19411 / UW-3/Cx).